The primary structure comprises 351 residues: Glycerol-1-phosphate dehydrogenase [NAD(P)+] (351 aa).

NAD(+)-binding positions include glycine 97–aspartate 101 and threonine 119–serine 122. Aspartate 124 contacts substrate. Residue serine 128 coordinates NAD(+). Aspartate 171 provides a ligand contact to substrate. Residues aspartate 171 and histidine 251 each contribute to the Zn(2+) site. Histidine 255 provides a ligand contact to substrate. Histidine 267 lines the Zn(2+) pocket.

It belongs to the glycerol-1-phosphate dehydrogenase family. As to quaternary structure, homodimer. Requires Zn(2+) as cofactor.

It localises to the cytoplasm. The enzyme catalyses sn-glycerol 1-phosphate + NAD(+) = dihydroxyacetone phosphate + NADH + H(+). It catalyses the reaction sn-glycerol 1-phosphate + NADP(+) = dihydroxyacetone phosphate + NADPH + H(+). It participates in membrane lipid metabolism; glycerophospholipid metabolism. Functionally, catalyzes the NAD(P)H-dependent reduction of dihydroxyacetonephosphate (DHAP or glycerone phosphate) to glycerol 1-phosphate (G1P). The G1P thus generated is used as the glycerophosphate backbone of phospholipids in the cellular membranes of Archaea. This Saccharolobus islandicus (strain M.16.27) (Sulfolobus islandicus) protein is Glycerol-1-phosphate dehydrogenase [NAD(P)+].